The following is a 494-amino-acid chain: Putative transporter SVOPL (494 aa).

The next 10 helical transmembrane spans lie at 48–68, 86–106, 121–141, 179–199, 203–223, 281–301, 350–370, 385–405, 431–451, and 460–480; these read IALF…IMLI, VAFV…LFGL, FLWG…IWFV, VFWL…IPTI, WLIR…KFIP, TLQI…VILA, IIST…INFL, LFFL…FLFM, AIGM…APFI, and FLGA…SAFT.

Belongs to the major facilitator superfamily.

Its subcellular location is the membrane. The chain is Putative transporter SVOPL (Svopl) from Mus musculus (Mouse).